The sequence spans 386 residues: MFSVRVPLATITDQQQLQVSPLKALSLADKENTPPSLSATPVLASKVARRILQDVAEPESKVSTNPSVEDEPLLRENPRRFVVFPIEYHDIWKMYKKAEASFWTAEEVDLSKDIQHWEALKPDERHFISHVLAFFAASDGIVNENLVERFSQEVQVTEARCFYGFQIAMENIHSEMYSLLIDTYIKDSKEREYLFNAIETMPCVKKKADWALRWIGDKEATYGERVVAFAAVEGIFFSGSFASIFWLKKRGLMPGLTFSNELISRDEGLHCDFACLMFKHLVHKPSEQRVQEIITNAVRIEQEFLTEALPVKLIGMNCTLMKQYIEFVADRLMLELGFNKIFKVENPFDFMENISLEGKTNFFEKRVGEYQRMGVMSNSFTLDADF.

Ser20 bears the Phosphoserine mark. At Thr33 the chain carries Phosphothreonine. The short motif at 49–51 (RRI) is the Cy element. 3 residues coordinate Fe cation: Asp139, Glu170, and His173. The active site involves Tyr177. Glu233, Glu267, and His270 together coordinate Fe cation.

Belongs to the ribonucleoside diphosphate reductase small chain family. In terms of assembly, heterodimer of a large and a small subunit. Interacts (via Cy motif and when phosphorylated at Thr-33) with CCNF; the interaction occurs exclusively in G2 and early M. Fe cation is required as a cofactor. Phosphorylation on Ser-20 relieves the inhibitory effect on Wnt signaling. Phosphorylated on Thr-33 by CDK1 and CDK2; predominantly in G2 and M phase. In terms of processing, ubiquitinated by the SCF(CCNF) E3 ubiquitin-protein ligase complex; leading to its degradation by the proteasome.

The protein resides in the cytoplasm. Its subcellular location is the nucleus. It catalyses the reaction a 2'-deoxyribonucleoside 5'-diphosphate + [thioredoxin]-disulfide + H2O = a ribonucleoside 5'-diphosphate + [thioredoxin]-dithiol. Functionally, provides the precursors necessary for DNA synthesis. Catalyzes the biosynthesis of deoxyribonucleotides from the corresponding ribonucleotides. Inhibits Wnt signaling. The polypeptide is Ribonucleoside-diphosphate reductase subunit M2 (RRM2) (Mesocricetus auratus (Golden hamster)).